The primary structure comprises 858 residues: Bifunctional uridylyltransferase/uridylyl-removing enzyme (858 aa).

The tract at residues 1–318 (MNPTDLHPIK…FPRPESDARA (318 aa)) is uridylyltransferase. The interval 319–674 (IDEEFRSLHG…VRPTEEGSGL (356 aa)) is uridylyl-removing. Positions 437–559 (VDQHTLAVIR…VKDERHLNAL (123 aa)) constitute an HD domain. ACT domains are found at residues 675–756 (QIMV…LADV) and 789–858 (RLSV…LAGE).

It belongs to the GlnD family. Requires Mg(2+) as cofactor.

It carries out the reaction [protein-PII]-L-tyrosine + UTP = [protein-PII]-uridylyl-L-tyrosine + diphosphate. The catalysed reaction is [protein-PII]-uridylyl-L-tyrosine + H2O = [protein-PII]-L-tyrosine + UMP + H(+). With respect to regulation, uridylyltransferase (UTase) activity is inhibited by glutamine, while glutamine activates uridylyl-removing (UR) activity. Modifies, by uridylylation and deuridylylation, the PII regulatory proteins (GlnB and homologs), in response to the nitrogen status of the cell that GlnD senses through the glutamine level. Under low glutamine levels, catalyzes the conversion of the PII proteins and UTP to PII-UMP and PPi, while under higher glutamine levels, GlnD hydrolyzes PII-UMP to PII and UMP (deuridylylation). Thus, controls uridylylation state and activity of the PII proteins, and plays an important role in the regulation of nitrogen assimilation and metabolism. The chain is Bifunctional uridylyltransferase/uridylyl-removing enzyme from Bordetella avium (strain 197N).